The following is a 428-amino-acid chain: Ribosomal RNA small subunit methyltransferase B (428 aa).

Residues 253–259 (CAAPGGK), aspartate 276, aspartate 302, and aspartate 321 each bind S-adenosyl-L-methionine. Cysteine 374 functions as the Nucleophile in the catalytic mechanism.

The protein belongs to the class I-like SAM-binding methyltransferase superfamily. RsmB/NOP family.

The protein resides in the cytoplasm. The catalysed reaction is cytidine(967) in 16S rRNA + S-adenosyl-L-methionine = 5-methylcytidine(967) in 16S rRNA + S-adenosyl-L-homocysteine + H(+). In terms of biological role, specifically methylates the cytosine at position 967 (m5C967) of 16S rRNA. The polypeptide is Ribosomal RNA small subunit methyltransferase B (Citrobacter koseri (strain ATCC BAA-895 / CDC 4225-83 / SGSC4696)).